The primary structure comprises 280 residues: Phosphonoacetaldehyde hydrolase (280 aa).

D23 acts as the Nucleophile in catalysis. Mg(2+) contacts are provided by D23 and A25. Residue K64 is the Schiff-base intermediate with substrate of the active site. A Mg(2+)-binding site is contributed by D197.

It belongs to the HAD-like hydrolase superfamily. PhnX family. Homodimer. Mg(2+) is required as a cofactor.

The enzyme catalyses phosphonoacetaldehyde + H2O = acetaldehyde + phosphate + H(+). Involved in phosphonate degradation. This Bordetella avium (strain 197N) protein is Phosphonoacetaldehyde hydrolase.